A 201-amino-acid chain; its full sequence is Small ribosomal subunit protein uS4c (201 aa).

The segment at 20-43 is disordered; sequence GLTSKRPRAGSDLRNQSRSGKRSQ. An S4 RNA-binding domain is found at 89–149; it reads MRLDNILFRL…NEQKSRALIQ (61 aa).

Belongs to the universal ribosomal protein uS4 family. As to quaternary structure, part of the 30S ribosomal subunit. Contacts protein S5. The interaction surface between S4 and S5 is involved in control of translational fidelity.

Its subcellular location is the plastid. It localises to the chloroplast. Functionally, one of the primary rRNA binding proteins, it binds directly to 16S rRNA where it nucleates assembly of the body of the 30S subunit. Its function is as follows. With S5 and S12 plays an important role in translational accuracy. This chain is Small ribosomal subunit protein uS4c (rps4), found in Vitis vinifera (Grape).